Consider the following 234-residue polypeptide: Thrombin-like enzyme acutin (234 aa).

Residue Met1 is a propeptide. The region spanning 2 to 225 (VIGGDECDIN…YTDWIQRNIA (224 aa)) is the Peptidase S1 domain. Disulfide bonds link Cys8–Cys140, Cys27–Cys43, Cys75–Cys232, Cys119–Cys186, Cys151–Cys165, and Cys176–Cys201. Residue Asn21 is glycosylated (N-linked (GlcNAc...) asparagine). Active-site charge relay system residues include His42 and Asp87. The active-site Charge relay system is Ser180.

Belongs to the peptidase S1 family. Snake venom subfamily. Monomer. In terms of tissue distribution, expressed by the venom gland.

It is found in the secreted. Functionally, thrombin-like snake venom serine protease. Has arginyl esterase and fibrinogen clotting activities. This Deinagkistrodon acutus (Hundred-pace snake) protein is Thrombin-like enzyme acutin.